Consider the following 575-residue polypeptide: Septation ring formation regulator EzrA (575 aa).

Over 1 to 8 (MSNGQLIY) the chain is Extracellular. The helical transmembrane segment at 9–27 (LMVAIAVILVLAYVVAIFL) threads the bilayer. Residues 28-575 (RKRNEGRLEA…YEKTRETIRF (548 aa)) lie on the Cytoplasmic side of the membrane. Coiled coils occupy residues 105–191 (LKAS…FVTL), 265–301 (LYEA…LYDI), 354–416 (VRRI…IEKD), and 456–526 (TASN…IQEA).

Belongs to the EzrA family.

It localises to the cell membrane. In terms of biological role, negative regulator of FtsZ ring formation; modulates the frequency and position of FtsZ ring formation. Inhibits FtsZ ring formation at polar sites. Interacts either with FtsZ or with one of its binding partners to promote depolymerization. This is Septation ring formation regulator EzrA from Streptococcus pneumoniae serotype 4 (strain ATCC BAA-334 / TIGR4).